The sequence spans 480 residues: Gasdermin-C2 (480 aa).

The triggers pyroptosis stretch occupies residues 1–226 (MGYSFDRASK…TCVILPSATK (226 aa)).

The protein belongs to the gasdermin family. Homooligomer; homooligomeric ring-shaped pore complex containing 27-28 subunits when inserted in the membrane. Cleavage by CASP8 relieves autoinhibition by releasing the N-terminal moiety (Gasdermin-C2, N-terminal) that initiates pyroptosis. In terms of processing, palmitoylated.

Its subcellular location is the cytoplasm. It localises to the cytosol. It is found in the cell membrane. With respect to regulation, the full-length protein before cleavage is inactive: intramolecular interactions between N- and C-terminal domains mediate autoinhibition in the absence of activation signal. The intrinsic pyroptosis-inducing activity is carried by the released N-terminal moiety (Gasdermin-C2, N-terminal) following cleavage by caspase CASP8 in response to type-2 immunity following worm infection. Functionally, this form constitutes the precursor of the pore-forming protein: upon cleavage, the released N-terminal moiety (Gasdermin-C2, N-terminal) binds to membranes and forms pores, triggering pyroptosis. In terms of biological role, pore-forming protein that causes membrane permeabilization and pyroptosis in response to type-2 immunity. Produced by the cleavage of gasdermin-C2 in response to type-2 immunity following worm infection. After cleavage, moves to the plasma membrane where it strongly binds to membrane inner leaflet lipids. Homooligomerizes within the membrane and forms pores of 10-15 nanometers (nm) of inner diameter, triggering pyroptosis and lytic cell death in enterocytes. The protein is Gasdermin-C2 of Mus musculus (Mouse).